Consider the following 406-residue polypeptide: Tyrosine--tRNA ligase (406 aa).

Y35 contacts L-tyrosine. The 'HIGH' region signature appears at 40–49 (PTADSLHVGH). L-tyrosine is bound by residues Y168 and Q172. The 'KMSKS' region signature appears at 228–232 (KMGKT). K231 contacts ATP. One can recognise an S4 RNA-binding domain in the interval 340–404 (AELLDILVEA…RGKKNYNKIV (65 aa)).

This sequence belongs to the class-I aminoacyl-tRNA synthetase family. TyrS type 1 subfamily. Homodimer.

The protein resides in the cytoplasm. The catalysed reaction is tRNA(Tyr) + L-tyrosine + ATP = L-tyrosyl-tRNA(Tyr) + AMP + diphosphate + H(+). Functionally, catalyzes the attachment of tyrosine to tRNA(Tyr) in a two-step reaction: tyrosine is first activated by ATP to form Tyr-AMP and then transferred to the acceptor end of tRNA(Tyr). The polypeptide is Tyrosine--tRNA ligase (Clostridium perfringens (strain 13 / Type A)).